We begin with the raw amino-acid sequence, 249 residues long: Glucosamine-6-phosphate deaminase (249 aa).

Asp-67 acts as the Proton acceptor; for enolization step in catalysis. Asn-136 acts as the For ring-opening step in catalysis. His-138 (proton acceptor; for ring-opening step) is an active-site residue. The active-site For ring-opening step is the Glu-143.

This sequence belongs to the glucosamine/galactosamine-6-phosphate isomerase family. NagB subfamily.

It carries out the reaction alpha-D-glucosamine 6-phosphate + H2O = beta-D-fructose 6-phosphate + NH4(+). Its pathway is amino-sugar metabolism; N-acetylneuraminate degradation; D-fructose 6-phosphate from N-acetylneuraminate: step 5/5. In terms of biological role, catalyzes the reversible isomerization-deamination of glucosamine 6-phosphate (GlcN6P) to form fructose 6-phosphate (Fru6P) and ammonium ion. The sequence is that of Glucosamine-6-phosphate deaminase from Clostridium botulinum (strain Eklund 17B / Type B).